A 237-amino-acid polypeptide reads, in one-letter code: BTB/POZ domain-containing protein KCTD6 (237 aa).

The segment at 1–104 (MDNGDWGYMM…FYQIEPLIQC (104 aa)) is interaction with ANK1 isoform Mu17. The segment at 10–110 (MTDPVTLNVG…LIQCLNDPKP (101 aa)) is interaction with CUL3. The BTB domain occupies 12-81 (DPVTLNVGGH…LRTSELTLPL (70 aa)). The segment at 113–187 (PMDTFEEVVE…TFGPCDYHQE (75 aa)) is interaction with USP21.

As to quaternary structure, homopentamer. Interacts with KCTD11; KCTD6 and KCTD11 may associate in pentameric assemblies. Interacts (via BTB domain) with CUL3; initially a 4:4 stoichiometry has been reported, however, electron microscopy revealed pentameric states with a five-pointed pinwheel shape. The interaction with CUL3 is indicative for a participation in a BCR (BTB-CUL3-RBX1) E3 ubiquitin-protein ligase complex. Interacts with HDAC1; probably indirect as the interaction is requires the presence of KCTD11. Interacts with USP21 (preferentially catalytic inactive form). Interacts with ANK1 isoform Mu17; detected in striated muscle. Interacts with USP11. Highly expressed in cerebellum and brain. Expression is down-regulated in medulloblastoma.

The protein resides in the cytoplasm. It localises to the myofibril. The protein localises to the sarcomere. It is found in the m line. It functions in the pathway protein modification; protein ubiquitination. Functionally, probable substrate-specific adapter of a BCR (BTB-CUL3-RBX1) E3 ubiquitin-protein ligase complex mediating the ubiquitination and subsequent proteasomal degradation of target proteins. Promotes the ubiquitination of HDAC1; the function seems to depend on KCTD11:KCTD6 oligomerization. Can function as antagonist of the Hedgehog pathway by affecting the nuclear transfer of transcription factor GLI1; the function probably occurs via HDAC1 down-regulation, keeping GLI1 acetylated and inactive. Inhibits cell growth and tumorigenicity of medulloblastoma (MDB). Involved in regulating protein levels of ANK1 isoform Mu17 probably implicating CUL3-dependent proteasomal degradation. The protein is BTB/POZ domain-containing protein KCTD6 (KCTD6) of Homo sapiens (Human).